Consider the following 232-residue polypeptide: 5'-methylthioadenosine/S-adenosylhomocysteine nucleosidase (232 aa).

Glutamate 12 (proton acceptor) is an active-site residue. Substrate-binding positions include glycine 78, isoleucine 152, and 173 to 174 (ME). Aspartate 197 serves as the catalytic Proton donor.

It belongs to the PNP/UDP phosphorylase family. MtnN subfamily. In terms of assembly, homodimer.

It catalyses the reaction S-adenosyl-L-homocysteine + H2O = S-(5-deoxy-D-ribos-5-yl)-L-homocysteine + adenine. The catalysed reaction is S-methyl-5'-thioadenosine + H2O = 5-(methylsulfanyl)-D-ribose + adenine. It carries out the reaction 5'-deoxyadenosine + H2O = 5-deoxy-D-ribose + adenine. Its pathway is amino-acid biosynthesis; L-methionine biosynthesis via salvage pathway; S-methyl-5-thio-alpha-D-ribose 1-phosphate from S-methyl-5'-thioadenosine (hydrolase route): step 1/2. In terms of biological role, catalyzes the irreversible cleavage of the glycosidic bond in both 5'-methylthioadenosine (MTA) and S-adenosylhomocysteine (SAH/AdoHcy) to adenine and the corresponding thioribose, 5'-methylthioribose and S-ribosylhomocysteine, respectively. Also cleaves 5'-deoxyadenosine, a toxic by-product of radical S-adenosylmethionine (SAM) enzymes, into 5-deoxyribose and adenine. Thus, is required for in vivo function of the radical SAM enzymes biotin synthase and lipoic acid synthase, that are inhibited by 5'-deoxyadenosine accumulation. The protein is 5'-methylthioadenosine/S-adenosylhomocysteine nucleosidase of Salmonella paratyphi B (strain ATCC BAA-1250 / SPB7).